We begin with the raw amino-acid sequence, 434 residues long: F-box only protein 15 (434 aa).

Residues 1 to 41 (MPSEILLKIFSYLDAVSLLCAGCVSRRFYHLANDNFIWIRI) enclose the F-box domain.

As to quaternary structure, directly interacts with SKP1 and CUL1.

Functionally, substrate-recognition component of the SCF (SKP1-CUL1-F-box protein)-type E3 ubiquitin ligase complex. The polypeptide is F-box only protein 15 (FBXO15) (Macaca fascicularis (Crab-eating macaque)).